The sequence spans 152 residues: uncharacterized protein (152 aa).

N-linked (GlcNAc...) asparagine; by host glycosylation occurs at asparagine 2. The next 3 membrane-spanning stretches (helical) occupy residues 5–25 (MILL…MNLW), 36–56 (LNDF…CYIL), and 68–88 (LIIT…QAFI). A glycan (N-linked (GlcNAc...) asparagine; by host) is linked at asparagine 113.

It is found in the membrane. This is an uncharacterized protein from Acanthamoeba polyphaga mimivirus (APMV).